The chain runs to 244 residues: Small ribosomal subunit protein uS3 (244 aa).

The region spanning 39–107 is the KH type-2 domain; the sequence is MRKFVMSELK…ETHLNIVEVR (69 aa). A disordered region spans residues 214 to 244; it reads ASERRALEGDAQGPASRERDRGDRRRERDNA. Basic and acidic residues predominate over residues 229–244; it reads SRERDRGDRRRERDNA.

This sequence belongs to the universal ribosomal protein uS3 family. As to quaternary structure, part of the 30S ribosomal subunit. Forms a tight complex with proteins S10 and S14.

In terms of biological role, binds the lower part of the 30S subunit head. Binds mRNA in the 70S ribosome, positioning it for translation. In Rhizobium etli (strain CIAT 652), this protein is Small ribosomal subunit protein uS3.